The following is a 1122-amino-acid chain: Telomerase reverse transcriptase (1122 aa).

Residues 1 to 239 (MTRAPRCPAV…TKRHLSLTST (239 aa)) are RNA-interacting domain 1. Residues 58–205 (MHWGSQPPPA…RPVGRNFTNL (148 aa)) form a GQ motif region. Residues 137–141 (WMLLL) are required for regulating specificity for telomeric DNA and for processivity for primer elongation. The tract at residues 213–296 (SSSRQEAPKP…KDLSSKGKVS (84 aa)) is disordered. The linker stretch occupies residues 240 to 328 (SVPSAKKARC…PRQNAFQLRP (89 aa)). Residues 284 to 295 (TAEKDLSSKGKV) show a composition bias toward basic and acidic residues. The segment at 306–528 (CKHKPSSTSL…VPAAEHRLRE (223 aa)) is required for oligomerization. Residues 329-540 (FIETRHFLYS…LATFLFWLMD (212 aa)) form an RNA-interacting domain 2 region. Residues 332 to 337 (TRHFLY) carry the TFLY; involved in RNA binding motif. A QFP motif region spans residues 381 to 511 (LCRTHRLSRR…MKVEDCHWLR (131 aa)). Residues 402 to 422 (LVNHAECQYVRLLRSHCRFRT) are CP motif. Ser-447 is modified (phosphoserine; by DYRK2). One can recognise a Reverse transcriptase domain in the interval 595–928 (EVRHHQDTWL…CLFPWCGLLL (334 aa)). A Phosphotyrosine; by SRC-type Tyr-kinases modification is found at Tyr-697. 3 residues coordinate Mg(2+): Asp-702, Asp-861, and Asp-862. Residues 907 to 921 (LGGAAPYQLPAHCLF) are required for oligomerization. The primer grip sequence stretch occupies residues 923 to 927 (WCGLL). The tract at residues 929–1122 (DTQTLEVFCD…LSTDFQTILD (194 aa)) is CTE.

Belongs to the reverse transcriptase family. Telomerase subfamily. In terms of assembly, catalytic component of the telomerase holoenzyme complex composed of one molecule of TERT, one molecule of WRAP53/TCAB1, two molecules of H/ACA ribonucleoprotein complex subunits DKC1, NOP10, NHP2 and GAR1, and a telomerase RNA template component (TERC). The telomerase holoenzyme complex is associated with TEP1, SMG6/EST1A and POT1. The molecular chaperone HSP90/P23 complex is required for correct assembly and stabilization of the active telomerase. Interacts directly with HSP90A and PTGES3. Interacts with HSPA1A; the interaction occurs in the absence of TERC and dissociates once the complex has formed. Interacts with RAN; the interaction promotes nuclear export of TERT. Interacts with XPO1. Interacts with PTPN11; the interaction retains TERT in the nucleus. Interacts with NCL (via RRM1 and C-terminal RRM4/Arg/Gly-rich domains); the interaction is important for nucleolar localization of TERT. Interacts with SMARCA4 (via the bromodomain); the interaction regulates Wnt-mediated signaling. Interacts with MCRS1 (isoform MCRS2); the interaction inhibits in vitro telomerase activity. Interacts with PIF1; the interaction has no effect on the elongation activity of TERT. Interacts with PML; the interaction recruits TERT to PML bodies and inhibits telomerase activity. Interacts with GNL3L. Interacts with isoform 1 and isoform 2 of NVL. Interacts with DHX36. Interacts with ATF7. Phosphorylation at Tyr-697 under oxidative stress leads to translocation of TERT to the cytoplasm and reduces its antiapoptotic activity. Dephosphorylated by SHP2/PTPN11 leading to nuclear retention. Phosphorylation by the AKT pathway promotes nuclear location. Phosphorylation at the G2/M phase at Ser-447 by DYRK2 promotes ubiquitination by the EDVP complex and degradation. In terms of processing, ubiquitinated by the EDVP complex, a E3 ligase complex following phosphorylation at Ser-447 by DYRK2. Ubiquitinated leads to proteasomal degradation. As to expression, high activity in intestine, liver and testis, moderate in lung, very low in muscle, heart and brain.

It is found in the nucleus. The protein localises to the nucleolus. It localises to the nucleoplasm. The protein resides in the chromosome. Its subcellular location is the telomere. It is found in the cytoplasm. The protein localises to the PML body. It carries out the reaction DNA(n) + a 2'-deoxyribonucleoside 5'-triphosphate = DNA(n+1) + diphosphate. Functionally, telomerase is a ribonucleoprotein enzyme essential for the replication of chromosome termini in most eukaryotes. Active in progenitor and cancer cells. Inactive, or very low activity, in normal somatic cells. Catalytic component of the teleromerase holoenzyme complex whose main activity is the elongation of telomeres by acting as a reverse transcriptase that adds simple sequence repeats to chromosome ends by copying a template sequence within the RNA component of the enzyme. Catalyzes the RNA-dependent extension of 3'-chromosomal termini with the 6-nucleotide telomeric repeat unit, 5'-TTAGGG-3'. The catalytic cycle involves primer binding, primer extension and release of product once the template boundary has been reached or nascent product translocation followed by further extension. More active on substrates containing 2 or 3 telomeric repeats. Telomerase activity is regulated by a number of factors including telomerase complex-associated proteins, chaperones and polypeptide modifiers. Modulates Wnt signaling. Plays important roles in aging and antiapoptosis. The sequence is that of Telomerase reverse transcriptase (Tert) from Mus musculus (Mouse).